Consider the following 511-residue polypeptide: Early growth response protein 1 (511 aa).

2 disordered regions span residues 133–169 (ASIPSSTSQATHPSSSSTSSIPSSSSSSTSSASLSCS) and 291–312 (PSRMRKYPNRPSKTPPHERPYA). The segment covering 137-169 (SSTSQATHPSSSSTSSIPSSSSSSTSSASLSCS) has biased composition (low complexity). 3 consecutive C2H2-type zinc fingers follow at residues 311–335 (YACPVETCDRRFSRSDELTRHIRIH), 341–363 (FQCRICMRNFSRSDHLTTHIRTH), and 369–391 (FACEICGRKFARSDERKRHTKIH). The tract at residues 384–406 (RKRHTKIHMRQKDKKAEKGATAA) is disordered. A compositionally biased stretch (basic residues) spans 386 to 396 (RHTKIHMRQKD).

This sequence belongs to the EGR C2H2-type zinc-finger protein family. As to expression, detected in muscle and brain.

It localises to the nucleus. The protein localises to the cytoplasm. Functionally, transcriptional regulator. Recognizes and binds to the DNA sequence 5'-GCG(T/G)GGGCG-3'(EGR-site) in the promoter region of target genes. Binds double-stranded target DNA, irrespective of the cytosine methylation status. Regulates the transcription of numerous target genes, and thereby plays an important role in regulating the response to growth factors, DNA damage, and ischemia. Plays a role in the regulation of cell survival, proliferation and cell death. Mediates responses to ischemia and hypoxia; regulates the expression of proteins that are involved in inflammatory processes. Plays a role in regulating the expression of circadian clock genes. Plays a role in the organization of Muller glia cells in the inner and outer plexiform layers of the retina. This chain is Early growth response protein 1 (egr1), found in Danio rerio (Zebrafish).